We begin with the raw amino-acid sequence, 471 residues long: Ribulose bisphosphate carboxylase large chain 2 (471 aa).

Substrate-binding residues include Asn-116 and Thr-166. The Proton acceptor role is filled by Lys-168. Position 170 (Lys-170) interacts with substrate. Lys-194, Asp-196, and Glu-197 together coordinate Mg(2+). Lys-194 bears the N6-carboxylysine mark. His-287 acts as the Proton acceptor in catalysis. Substrate-binding residues include Arg-288, His-320, and Ser-372.

Belongs to the RuBisCO large chain family. Type I subfamily. In terms of assembly, heterohexadecamer of 8 large chains and 8 small chains. Mg(2+) serves as cofactor.

The protein localises to the carboxysome. It carries out the reaction 2 (2R)-3-phosphoglycerate + 2 H(+) = D-ribulose 1,5-bisphosphate + CO2 + H2O. The enzyme catalyses D-ribulose 1,5-bisphosphate + O2 = 2-phosphoglycolate + (2R)-3-phosphoglycerate + 2 H(+). Functionally, ruBisCO catalyzes two reactions: the carboxylation of D-ribulose 1,5-bisphosphate, the primary event in carbon dioxide fixation, as well as the oxidative fragmentation of the pentose substrate. Both reactions occur simultaneously and in competition at the same active site. This is Ribulose bisphosphate carboxylase large chain 2 from Hydrogenovibrio marinus.